Reading from the N-terminus, the 196-residue chain is uncharacterized protein (196 aa).

This is an uncharacterized protein from Sinorhizobium fredii (strain NBRC 101917 / NGR234).